We begin with the raw amino-acid sequence, 604 residues long: Procollagen galactosyltransferase 1 (604 aa).

Residues 1–18 (MHLLCFFFLLLWTGPARS) form the signal peptide. N-linked (GlcNAc...) asparagine glycosylation is found at asparagine 78, asparagine 166, asparagine 363, and asparagine 561. The segment covering 570–580 (RARSRKSREQE) has biased composition (basic and acidic residues). The tract at residues 570–604 (RARSRKSREQEELSSEAQNTDVLQSPLDSTARDEL) is disordered. The segment covering 584–597 (SEAQNTDVLQSPLD) has biased composition (polar residues). The Prevents secretion from ER signature appears at 601 to 604 (RDEL).

The protein belongs to the glycosyltransferase 25 family.

It localises to the endoplasmic reticulum lumen. The catalysed reaction is (5R)-5-hydroxy-L-lysyl-[collagen] + UDP-alpha-D-galactose = (5R)-5-O-(beta-D-galactosyl)-5-hydroxy-L-lysyl-[collagen] + UDP + H(+). Beta-galactosyltransferase that transfers beta-galactose to hydroxylysine residues of type I collagen. By acting on collagen glycosylation, facilitates the formation of collagen triple helix. The chain is Procollagen galactosyltransferase 1 (colgalt1) from Danio rerio (Zebrafish).